Reading from the N-terminus, the 402-residue chain is Tryptophan synthase beta chain (402 aa).

Lysine 91 is modified (N6-(pyridoxal phosphate)lysine).

This sequence belongs to the TrpB family. Tetramer of two alpha and two beta chains. Requires pyridoxal 5'-phosphate as cofactor.

The enzyme catalyses (1S,2R)-1-C-(indol-3-yl)glycerol 3-phosphate + L-serine = D-glyceraldehyde 3-phosphate + L-tryptophan + H2O. Its pathway is amino-acid biosynthesis; L-tryptophan biosynthesis; L-tryptophan from chorismate: step 5/5. The beta subunit is responsible for the synthesis of L-tryptophan from indole and L-serine. This is Tryptophan synthase beta chain from Streptococcus thermophilus (strain CNRZ 1066).